The primary structure comprises 389 residues: MDLFEYQAKELFAKHNVPTTPGRVTTTAEDAKAIAEEIGKPVMIKAQVKVGGRGKAGGVKYAATPDDALTHAQNILGLDIKGHIVKKILVAEASDIAEEYYISFLLDRANRTYLAMCSVEGGVEIEVTAEENPDALAKVPVDAVKGVDLALAREIAEKGKLPAEVLDSAAVTIQKLWEVFVGEDATLVEVNPLVRTPDNQILALDGKVTLDGNADFRQPGHAEFEDKDATDPLELKAKEHDLNYVKLDGQVGIIGNGAGLVMSTLDVVAYAGENHNGVKPANFLDIGGGASAEVMAAGLDVILGDSQVKSVFVNVFGGITACDAVANGIVGALKTLGNTASKPLVVRLDGNKVEEGRAILAEFNHPLVIQAETMDAGADKAAALAAASN.

In terms of domain architecture, ATP-grasp spans 9-236; it reads KELFAKHNVP…KDATDPLELK (228 aa). ATP contacts are provided by residues K45, 52 to 54, S94, and E99; that span reads GRG. The Mg(2+) site is built by N191 and D205. Substrate-binding positions include N256 and 318 to 320; that span reads GIT.

Belongs to the succinate/malate CoA ligase beta subunit family. Heterotetramer of two alpha and two beta subunits. Mg(2+) is required as a cofactor.

It carries out the reaction succinate + ATP + CoA = succinyl-CoA + ADP + phosphate. The enzyme catalyses GTP + succinate + CoA = succinyl-CoA + GDP + phosphate. Its pathway is carbohydrate metabolism; tricarboxylic acid cycle; succinate from succinyl-CoA (ligase route): step 1/1. Its function is as follows. Succinyl-CoA synthetase functions in the citric acid cycle (TCA), coupling the hydrolysis of succinyl-CoA to the synthesis of either ATP or GTP and thus represents the only step of substrate-level phosphorylation in the TCA. The beta subunit provides nucleotide specificity of the enzyme and binds the substrate succinate, while the binding sites for coenzyme A and phosphate are found in the alpha subunit. This is Succinate--CoA ligase [ADP-forming] subunit beta from Mycobacteroides abscessus (strain ATCC 19977 / DSM 44196 / CCUG 20993 / CIP 104536 / JCM 13569 / NCTC 13031 / TMC 1543 / L948) (Mycobacterium abscessus).